We begin with the raw amino-acid sequence, 265 residues long: Phosphatidylglycerol--prolipoprotein diacylglyceryl transferase (265 aa).

A run of 7 helical transmembrane segments spans residues 17–37 (LAIR…IWLA), 59–79 (MLFY…VLFY), 94–114 (VWKG…AMSI), 123–143 (VLDV…FGRL), 177–197 (SPLY…WLFA), 204–224 (MAVG…TEYF), and 238–258 (ISAG…MLLI). Residue Arg-142 participates in a 1,2-diacyl-sn-glycero-3-phospho-(1'-sn-glycerol) binding.

Belongs to the Lgt family.

It localises to the cell inner membrane. The enzyme catalyses L-cysteinyl-[prolipoprotein] + a 1,2-diacyl-sn-glycero-3-phospho-(1'-sn-glycerol) = an S-1,2-diacyl-sn-glyceryl-L-cysteinyl-[prolipoprotein] + sn-glycerol 1-phosphate + H(+). The protein operates within protein modification; lipoprotein biosynthesis (diacylglyceryl transfer). Its function is as follows. Catalyzes the transfer of the diacylglyceryl group from phosphatidylglycerol to the sulfhydryl group of the N-terminal cysteine of a prolipoprotein, the first step in the formation of mature lipoproteins. In Janthinobacterium sp. (strain Marseille) (Minibacterium massiliensis), this protein is Phosphatidylglycerol--prolipoprotein diacylglyceryl transferase.